Here is a 261-residue protein sequence, read N- to C-terminus: Homeobox-leucine zipper protein HOX24 (261 aa).

2 disordered regions span residues 42 to 67 (AAAAGRGGGDGDGGGGGGGGGERKRR) and 160 to 188 (KLNERQDQSGSCDGGGAEGDDDDKRNSVM). Over residues 46-61 (GRGGGDGDGGGGGGGG) the composition is skewed to gly residues. Positions 61 to 121 (GGERKRRFTE…NKRARWRSKQ (61 aa)) form a DNA-binding region, homeobox. A leucine-zipper region spans residues 120–164 (KQIEHDYAALRAQYDALHARVESLRQEKLALADQVDELRGKLNER).

It belongs to the HD-ZIP homeobox family. Class I subfamily. In terms of tissue distribution, expressed in roots and panicles.

It is found in the nucleus. In terms of biological role, probable transcription factor. In Oryza sativa subsp. japonica (Rice), this protein is Homeobox-leucine zipper protein HOX24 (HOX24).